The primary structure comprises 362 residues: uncharacterized protein (362 aa).

The chain crosses the membrane as a helical span at residues 13-33 (VLILSVGLNMLFLLLFYSAIF). In terms of domain architecture, LysM spans 314-357 (EEYVVQDGDSLWLIAKRFGIPMDKIIQKNGLNHHRLFPGKVLKL).

The protein belongs to the chlamydial CPn_0593/CT_474/TC_0759 family.

The protein localises to the membrane. This is an uncharacterized protein from Chlamydia pneumoniae (Chlamydophila pneumoniae).